The following is a 465-amino-acid chain: Asparagine--tRNA ligase (465 aa).

Belongs to the class-II aminoacyl-tRNA synthetase family. Homodimer.

Its subcellular location is the cytoplasm. It catalyses the reaction tRNA(Asn) + L-asparagine + ATP = L-asparaginyl-tRNA(Asn) + AMP + diphosphate + H(+). In Clostridium perfringens (strain SM101 / Type A), this protein is Asparagine--tRNA ligase.